A 75-amino-acid polypeptide reads, in one-letter code: Brevinin-2ISc (75 aa).

The N-terminal stretch at 1–22 (MFTLKKSLLLLFFLGTISLSLC) is a signal peptide. A propeptide spans 23–40 (EEERDADEDEGEMTEEEV) (removed in mature form). A disulfide bond links C69 and C75.

Expressed by the skin glands.

It is found in the secreted. In terms of biological role, has antimicrobial activity against Gram-negative bacterium E.coli ATCC 8739 (MIC=50 ug) and against Gram positive bacteria S.aureus ATCC 6538 (MIC=25 ug). Has no activity against methicillin-resistant S.aureus ATCC 43300, B.subtilis ATCC 6633 and against fungus C.albicans ATCC 90028. The sequence is that of Brevinin-2ISc from Odorrana ishikawae (Ishikawa's frog).